The sequence spans 412 residues: Cytochrome P450-SOY (412 aa).

Polar residues predominate over residues 1–25 (MTESTTDPARQNLDPTSPAPATSFP). Residues 1-38 (MTESTTDPARQNLDPTSPAPATSFPQDRGCPYHPPAGY) are disordered. Cysteine 361 provides a ligand contact to heme.

Belongs to the cytochrome P450 family. Heme serves as cofactor.

The protein resides in the cytoplasm. This Streptomyces griseus protein is Cytochrome P450-SOY (cyp105D1).